The primary structure comprises 631 residues: MASPEGTDDEGGGCTGWFHVEAVVKKRTGDIISEDETEEDEGTASDLDGFLDNSNVITTQADRETAQQLLHAQNTYADTQTLHNLKRKYLGSPLGDISNQQFVCREGVKRRIIDTDVADSGYGNTLEVEATQQVQDNTYGSGKQQDGGSQTSVCSRENSIEADSDMDIGATPPQQIQELLKSSNVQAKLCYKFKELFGIPFSELVRTFKSDSTCCHDWICAMFGVNETLAEALKTIIKSQCMYYHIQCLTCTWGVVILMLIRYTCGKNRKTIIKSLSSIVNVPSEQMLVQPPKIRSPAVALYFYKTAMSNISDIYGETPEWIQRQTQIQHSFQDCQFELSKMVQWAFDNDVTDDSDIAFYYAQLADVDSNAQAFLKSNMQAKYVKDCGIMCRHYKRAQQQQMNMKQWITHICSKVDEGGDWRPIVQFLRYQGVDFISFLSYFKLFLRGTPKHNCLVLYGPPNTGKSCFAMSLIQFFQGSVISYVNSHSHFWLQPLDNAKLGMLDDATDACWRYIDEYMRNLLDGNPVSLDRKHKQLVQIKCPPVIITTNINPLHDAKLQYLHSRIHVVPFLNPFPIDTNGNPVYQLNNVNWKCFFERTWSRLDLNNDEDKENHGDSMPTFRCVPGENSRLF.

The tract at residues 28 to 48 is disordered; sequence TGDIISEDETEEDEGTASDLD. Acidic residues predominate over residues 32 to 43; it reads ISEDETEEDEGT. Residues 86–88 carry the Nuclear localization signal motif; the sequence is KRK. Serine 92 is modified (phosphoserine; by host). Residues 168-334 are DNA-binding region; sequence IGATPPQQIQ…QTQIQHSFQD (167 aa). Residues 433–583 enclose the SF3 helicase domain; it reads VDFISFLSYF…FPIDTNGNPV (151 aa). 459-466 contributes to the ATP binding site; the sequence is GPPNTGKS. Residue lysine 540 forms a Glycyl lysine isopeptide (Lys-Gly) (interchain with G-Cter in SUMO) linkage.

This sequence belongs to the papillomaviridae E1 protein family. In terms of assembly, can form hexamers. Interacts with E2 protein; this interaction increases E1 DNA binding specificity. Interacts with host DNA polymerase subunit POLA2. Interacts with host single stranded DNA-binding protein RPA1. Interacts with host TOP1; this interaction stimulates the enzymatic activity of TOP1. In terms of processing, phosphorylated. Post-translationally, sumoylated.

The protein resides in the host nucleus. The enzyme catalyses Couples ATP hydrolysis with the unwinding of duplex DNA by translocating in the 3'-5' direction.. The catalysed reaction is ATP + H2O = ADP + phosphate + H(+). ATP-dependent DNA 3'-5' helicase required for initiation of viral DNA replication. It forms a complex with the viral E2 protein. The E1-E2 complex binds to the replication origin which contains binding sites for both proteins. During the initial step, a dimer of E1 interacts with a dimer of protein E2 leading to a complex that binds the viral origin of replication with high specificity. Then, a second dimer of E1 displaces the E2 dimer in an ATP-dependent manner to form the E1 tetramer. Following this, two E1 monomers are added to each half of the site, which results in the formation of two E1 trimers on the viral ori. Subsequently, two hexamers will be created. The double hexamer acts as a bi-directional helicase machinery and unwinds the viral DNA and then recruits the host DNA polymerase to start replication. The protein is Replication protein E1 of Homo sapiens (Human).